Here is a 247-residue protein sequence, read N- to C-terminus: 1-(5-phosphoribosyl)-5-[(5-phosphoribosylamino)methylideneamino] imidazole-4-carboxamide isomerase 1 (247 aa).

Glu-8 functions as the Proton acceptor in the catalytic mechanism. Residue Asp-128 is the Proton donor of the active site.

Belongs to the HisA/HisF family.

Its subcellular location is the cytoplasm. It carries out the reaction 1-(5-phospho-beta-D-ribosyl)-5-[(5-phospho-beta-D-ribosylamino)methylideneamino]imidazole-4-carboxamide = 5-[(5-phospho-1-deoxy-D-ribulos-1-ylimino)methylamino]-1-(5-phospho-beta-D-ribosyl)imidazole-4-carboxamide. It participates in amino-acid biosynthesis; L-histidine biosynthesis; L-histidine from 5-phospho-alpha-D-ribose 1-diphosphate: step 4/9. This Ruegeria sp. (strain TM1040) (Silicibacter sp.) protein is 1-(5-phosphoribosyl)-5-[(5-phosphoribosylamino)methylideneamino] imidazole-4-carboxamide isomerase 1.